Reading from the N-terminus, the 437-residue chain is Citrate synthase (437 aa).

Active-site residues include histidine 316 and aspartate 372.

This sequence belongs to the citrate synthase family. As to quaternary structure, homohexamer.

The catalysed reaction is oxaloacetate + acetyl-CoA + H2O = citrate + CoA + H(+). It participates in carbohydrate metabolism; tricarboxylic acid cycle; isocitrate from oxaloacetate: step 1/2. With respect to regulation, weakly inhibited by ATP (apparent Ki = 10 mm). The polypeptide is Citrate synthase (gltA) (Corynebacterium glutamicum (strain ATCC 13032 / DSM 20300 / JCM 1318 / BCRC 11384 / CCUG 27702 / LMG 3730 / NBRC 12168 / NCIMB 10025 / NRRL B-2784 / 534)).